Consider the following 218-residue polypeptide: 3-isopropylmalate dehydratase small subunit (218 aa).

Belongs to the LeuD family. LeuD type 1 subfamily. As to quaternary structure, heterodimer of LeuC and LeuD.

It catalyses the reaction (2R,3S)-3-isopropylmalate = (2S)-2-isopropylmalate. The protein operates within amino-acid biosynthesis; L-leucine biosynthesis; L-leucine from 3-methyl-2-oxobutanoate: step 2/4. In terms of biological role, catalyzes the isomerization between 2-isopropylmalate and 3-isopropylmalate, via the formation of 2-isopropylmaleate. The chain is 3-isopropylmalate dehydratase small subunit from Alkalilimnicola ehrlichii (strain ATCC BAA-1101 / DSM 17681 / MLHE-1).